We begin with the raw amino-acid sequence, 266 residues long: Non-structural maintenance of chromosomes element 1 homolog (266 aa).

The tract at residues 1-102 (MQGNTRRTGV…SVSKMASDFA (102 aa)) is interaction with NSMCE3. The RING-type; atypical zinc-finger motif lies at 191 to 232 (CNICRSLLIQGQSCETCGIRMHLPCVAKYFQSSSEPHCPHCN). The span at 243–252 (FDPEKERETG) shows a compositional bias: basic and acidic residues. A disordered region spans residues 243–266 (FDPEKERETGMSRSNKRPSRSRQH). Basic residues predominate over residues 256–266 (SNKRPSRSRQH).

The protein belongs to the NSE1 family. As to quaternary structure, component of the SMC5-SMC6 complex which consists at least of SMC5, SMC6, NSMCE2, NSMCE1, NSMCE4A or EID3 and NSMCE3. NSMCE1, NSMCE4A or EID3 and NSMCE3 probably form a subcomplex that bridges the head domains of the SMC5-SMC6 heterodimer. Interacts with NSMCE3. In terms of processing, ubiquitinated.

Its subcellular location is the nucleus. It is found in the chromosome. The protein resides in the telomere. The enzyme catalyses S-ubiquitinyl-[E2 ubiquitin-conjugating enzyme]-L-cysteine + [acceptor protein]-L-lysine = [E2 ubiquitin-conjugating enzyme]-L-cysteine + N(6)-ubiquitinyl-[acceptor protein]-L-lysine.. Functionally, RING-type zinc finger-containing E3 ubiquitin ligase that assembles with melanoma antigen protein (MAGE) to catalyze the direct transfer of ubiquitin from E2 ubiquitin-conjugating enzyme to a specific substrate. Within MAGE-RING ubiquitin ligase complex, MAGE stimulates and specifies ubiquitin ligase activity likely through recruitment and/or stabilization of the E2 ubiquitin-conjugating enzyme at the E3:substrate complex. Involved in maintenance of genome integrity, DNA damage response and DNA repair. NSMCE3/MAGEG1 and NSMCE1 ubiquitin ligase are components of SMC5-SMC6 complex and may positively regulate homologous recombination-mediated DNA repair. This chain is Non-structural maintenance of chromosomes element 1 homolog (NSMCE1), found in Bos taurus (Bovine).